The following is a 148-amino-acid chain: Large ribosomal subunit protein bL9 (148 aa).

Belongs to the bacterial ribosomal protein bL9 family.

In terms of biological role, binds to the 23S rRNA. The polypeptide is Large ribosomal subunit protein bL9 (Acetivibrio thermocellus (strain ATCC 27405 / DSM 1237 / JCM 9322 / NBRC 103400 / NCIMB 10682 / NRRL B-4536 / VPI 7372) (Clostridium thermocellum)).